A 264-amino-acid polypeptide reads, in one-letter code: Phosphatidylglycerol--prolipoprotein diacylglyceryl transferase (264 aa).

7 consecutive transmembrane segments (helical) span residues 14–34 (VGPL…LLFM), 57–77 (LLLY…VLFF), 89–109 (ILAI…VLVA), 127–147 (FIAP…FING), 176–196 (QLYQ…VYSA), 202–222 (KAVS…AEFF), and 235–255 (LGLS…VGLL). Arg-140 is a binding site for a 1,2-diacyl-sn-glycero-3-phospho-(1'-sn-glycerol).

This sequence belongs to the Lgt family.

The protein resides in the cell inner membrane. The enzyme catalyses L-cysteinyl-[prolipoprotein] + a 1,2-diacyl-sn-glycero-3-phospho-(1'-sn-glycerol) = an S-1,2-diacyl-sn-glyceryl-L-cysteinyl-[prolipoprotein] + sn-glycerol 1-phosphate + H(+). Its pathway is protein modification; lipoprotein biosynthesis (diacylglyceryl transfer). Catalyzes the transfer of the diacylglyceryl group from phosphatidylglycerol to the sulfhydryl group of the N-terminal cysteine of a prolipoprotein, the first step in the formation of mature lipoproteins. The protein is Phosphatidylglycerol--prolipoprotein diacylglyceryl transferase of Aromatoleum aromaticum (strain DSM 19018 / LMG 30748 / EbN1) (Azoarcus sp. (strain EbN1)).